Consider the following 4574-residue polypeptide: E3 ubiquitin-protein ligase MYCBP2 (4574 aa).

Disordered stretches follow at residues 92-115 (RGKK…VKTR) and 599-620 (SASK…PYKP). RCC1 repeat units lie at residues 591 to 646 (DGSV…IVTK), 690 to 746 (SGEV…MMCQ), 943 to 993 (NGDV…VLLM), and 995 to 1051 (GQVF…LRID). The segment covering 611–620 (SRRQPKPYKP) has biased composition (basic residues). Cysteines 1733 and 1850 form a disulfide. Disordered regions lie at residues 1976–1998 (APPT…EQGL) and 2313–2332 (LQRL…LTFG). Polar residues-rich tracts occupy residues 1981-1998 (NPNQ…EQGL) and 2317-2328 (PGTSSNSATGTD). A Filamin repeat occupies 2336–2417 (APKLEATYEP…IHVTIDGIEI (82 aa)). Disordered regions lie at residues 2613-2824 (GFDY…PSPH), 2845-2922 (SNDE…KQAM), 3085-3116 (SPGS…KAEV), 3345-3365 (PGSN…TDSD), and 3505-3526 (FETE…EQEK). Composition is skewed to basic and acidic residues over residues 2639–2663 (HRQE…KSKN) and 2678–2688 (DTGKLRSDSHS). A compositionally biased stretch (polar residues) spans 2716–2729 (NPGSRSSSPKQKTF). Low complexity predominate over residues 2730–2745 (TSGRSSPSSTSSPRSS). 3 stretches are compositionally biased toward basic and acidic residues: residues 2761-2772 (VHLDPPRERSKS), 2854-2864 (SELHNAEEGSS), and 2874-2883 (PVKEELESRS). Basic residues-rich tracts occupy residues 2887-2900 (VSRK…RPKK) and 3102-3111 (KKTKKEKKKK). Basic and acidic residues predominate over residues 3515–3526 (NKGNKENLEQEK). Residues 3617 to 3795 (FNISVQSGYE…SVAQQKNCEA (179 aa)) enclose the DOC domain. Positions 3815 to 3841 (GDAEPTPEQEEKNLLSSPEGEDKAPSD) are disordered. Residues Cys-4324, Cys-4327, Cys-4342, His-4344, His-4347, Cys-4350, Cys-4371, Cys-4374, Cys-4440, and Cys-4443 each coordinate Zn(2+). An RING-type; atypical zinc finger spans residues 4324–4375 (CMICFTEALSAAPAIQLDCSHVFHLQCTRRVLENRWLGPRITFGFMSCPICK). Positions 4435 to 4572 (YAYYVCFKCK…LGCGVCRNAH (138 aa)) are tandem cysteine domain. Residue Cys-4454 is part of the active site. 7 residues coordinate Zn(2+): Cys-4471, Cys-4474, Cys-4483, His-4486, Cys-4495, Cys-4498, and Cys-4499. Cys-4506 is an active-site residue. Zn(2+) contacts are provided by Cys-4513, Cys-4516, Cys-4534, Cys-4548, His-4554, Cys-4565, and Cys-4568.

Belongs to the RING-Cys relay (RCR) family. Widely expressed when the visual system begins developing. In the eye, expressed in all cells, including retinal ganglion cells, with no obvious gradient.

The protein localises to the nucleus. Its subcellular location is the cell projection. The protein resides in the axon. It localises to the cytoplasm. It is found in the cytoskeleton. The enzyme catalyses [E2 ubiquitin-conjugating enzyme]-S-ubiquitinyl-L-cysteine + [acceptor protein]-L-threonine = [E2 ubiquitin-conjugating enzyme]-L-cysteine + [acceptor protein]-3-O-ubiquitinyl-L-threonine.. Its pathway is protein modification; protein ubiquitination. In terms of biological role, atypical E3 ubiquitin-protein ligase which specifically mediates ubiquitination of threonine and serine residues on target proteins, instead of ubiquitinating lysine residues. Shows esterification activity towards both threonine and serine, with a preference for threonine, and acts via two essential catalytic cysteine residues that relay ubiquitin to its substrate via thioester intermediates. Interacts with the E2 enzymes UBE2D1, UBE2D3, UBE2E1 and UBE2L3. Plays a key role in neural development, probably by mediating ubiquitination of threonine residues on target proteins. Involved in different processes such as regulation of neurite outgrowth, synaptic growth, synaptogenesis and axon degeneration. Required in the visual system for correct fasciculation, targeting and mapping of retinal axons. Acts as a regulator of pteridine synthesis. May play a role in the regulation of the circadian clock gene expression. In Danio rerio (Zebrafish), this protein is E3 ubiquitin-protein ligase MYCBP2.